We begin with the raw amino-acid sequence, 130 residues long: Small ribosomal subunit protein bS6 (130 aa).

Residues 100–130 form a disordered region; that stretch reads SPMVKAKDERRERREDFAEAGDDVEAGDSEE. Residues 104–116 show a composition bias toward basic and acidic residues; the sequence is KAKDERRERREDF. A compositionally biased stretch (acidic residues) spans 117–130; it reads AEAGDDVEAGDSEE.

Belongs to the bacterial ribosomal protein bS6 family.

Functionally, binds together with bS18 to 16S ribosomal RNA. This Pectobacterium atrosepticum (strain SCRI 1043 / ATCC BAA-672) (Erwinia carotovora subsp. atroseptica) protein is Small ribosomal subunit protein bS6.